A 273-amino-acid chain; its full sequence is Dormancy associated translation inhibitor (273 aa).

As to quaternary structure, interacts with human TLR2.

In terms of biological role, involved in translation regulation. Can also stimulate macrophages and peripheral blood mononuclear cells (PBMC) to secrete important cytokines that may be significant in granuloma formation and its maintenance. Increases secretion of IFN-gamma, TNF-alpha, IL-1 beta and IL-8 through human Toll-like receptor 2 (TLR2) signaling pathway. The protein is Dormancy associated translation inhibitor of Mycobacterium tuberculosis (strain CDC 1551 / Oshkosh).